The chain runs to 508 residues: Immunoglobulin G-binding protein A (508 aa).

A signal peptide spans 1-36 (MKKKNIYSIRKLGVGIASVTLGTLLISGGVTPAANA). The YSIRK-G/S signaling motif motif lies at 7 to 18 (YSIRKLGVGIAS). One copy of the Immunoglobulin-binding region E repeat lies at 37–92 (AQHDEAQQNAFYQVLNMPNLNADQRNGFIQSLKDDPSQSANVLGEAQKLNDSQAPK). One copy of the Immunoglobulin-binding region D repeat lies at 93 to 153 (ADAQQNNFNK…KKLNESQAPK (61 aa)). One copy of the Immunoglobulin-binding region A repeat lies at 154-211 (ADNNFNKEQQNAFYEILNMPNLNEEQRNGFIQSLKDDPSQSANLLSEAKKLNESQAPK). The Immunoglobulin-binding region B repeat unit spans residues 212-269 (ADNKFNKEQQNAFYEILHLPNLNEEQRNGFIQSLKDDPSQSANLLAEAKKLNDAQAPK). The stretch at 270 to 327 (ADNKFNKEQQNAFYEILHLPNLTEEQRNGFIQSLKDDPSVSKEILAEAKKLNDAQAPK) is one Immunoglobulin-binding region C repeat. The segment covering 318-412 (KKLNDAQAPK…GNKPGKEDGN (95 aa)) has biased composition (basic and acidic residues). Disordered stretches follow at residues 318–421 (KKLN…KPGD) and 459–479 (KKQP…ETGE). 10 repeat units span residues 333 to 340 (KPGKEDNN), 341 to 348 (KPGKEDNN), 349 to 356 (KPGKEDNN), 357 to 364 (KPGKEDGN), 365 to 372 (KPGKEDNK), 373 to 380 (KPGKEDGN), 381 to 388 (KPGKEDNK), 389 to 396 (KPGKEDGN), 397 to 404 (KPGKEDGN), and 405 to 412 (KPGKEDGN). Positions 333–412 (KPGKEDNNKP…GNKPGKEDGN (80 aa)) are 10 X 8 AA approximate tandem repeats. The LysM domain occupies 413–457 (GVHVVKPGDTVNDIAKANGTTADKIAADNKLADKNMIKPGQELVV). The LPXTG sorting signal motif lies at 474–478 (LPETG). Thr477 is modified (pentaglycyl murein peptidoglycan amidated threonine). Positions 478-508 (GEENPFIGTTVFGGLSLALGAALLAGRRREL) are cleaved as a propeptide — removed by sortase.

The protein belongs to the immunoglobulin-binding protein SpA family. As to quaternary structure, interacts with host TNFRSF1A; this interaction leads to the stimulation of both surface expression and shedding of TNFRSF1A.

It localises to the secreted. The protein resides in the cell wall. Functionally, plays a role in the inhibition of the host innate and adaptive immune responses. Possesses five immunoglobulin-binding domains that capture both the fragment crystallizable region (Fc region) and the Fab region (part of Ig that identifies antigen) of immunoglobulins. In turn, Staphylococcus aureus is protected from phagocytic killing via inhibition of Ig Fc region. In addition, the host elicited B-cell response is prevented due to a decrease of antibody-secreting cell proliferation that enter the bone marrow, thereby decreasing long-term antibody production. Inhibits osteogenesis by preventing osteoblast proliferation and expression of alkaline phosphatase, type I collagen, osteopontin and osteocalcin. Acts directly as a pro-inflammatory factor in the lung through its ability to bind and activate tumor necrosis factor alpha receptor 1/TNFRSF1A. The protein is Immunoglobulin G-binding protein A (spa) of Staphylococcus aureus (strain Newman).